We begin with the raw amino-acid sequence, 876 residues long: Alanine--tRNA ligase (876 aa).

Lys-74 bears the N6-acetyllysine mark. Zn(2+) is bound by residues His-564, His-568, Cys-666, and His-670.

It belongs to the class-II aminoacyl-tRNA synthetase family. In terms of assembly, homotetramer. Requires Zn(2+) as cofactor.

Its subcellular location is the cytoplasm. The catalysed reaction is tRNA(Ala) + L-alanine + ATP = L-alanyl-tRNA(Ala) + AMP + diphosphate. In terms of biological role, catalyzes the attachment of alanine to tRNA(Ala) in a two-step reaction: alanine is first activated by ATP to form Ala-AMP and then transferred to the acceptor end of tRNA(Ala). Also edits incorrectly charged Ser-tRNA(Ala) and Gly-tRNA(Ala) via its editing domain. The sequence is that of Alanine--tRNA ligase from Escherichia coli (strain ATCC 8739 / DSM 1576 / NBRC 3972 / NCIMB 8545 / WDCM 00012 / Crooks).